The sequence spans 350 residues: Holliday junction branch migration complex subunit RuvB (350 aa).

Residues 1 to 182 (MEDRIVTPLN…FGVLCPMDFY (182 aa)) form a large ATPase domain (RuvB-L) region. Residues leucine 21, arginine 22, glycine 63, lysine 66, threonine 67, threonine 68, 129–131 (EDY), arginine 172, tyrosine 182, and arginine 219 each bind ATP. Threonine 67 is a binding site for Mg(2+). The tract at residues 183 to 253 (DQEELSEIVV…TSKAALELLE (71 aa)) is small ATPAse domain (RuvB-S). The segment at 256–350 (KEGFDSIDNK…KQSSLFDGEV (95 aa)) is head domain (RuvB-H). 2 residues coordinate DNA: arginine 311 and arginine 316.

This sequence belongs to the RuvB family. In terms of assembly, homohexamer. Forms an RuvA(8)-RuvB(12)-Holliday junction (HJ) complex. HJ DNA is sandwiched between 2 RuvA tetramers; dsDNA enters through RuvA and exits via RuvB. An RuvB hexamer assembles on each DNA strand where it exits the tetramer. Each RuvB hexamer is contacted by two RuvA subunits (via domain III) on 2 adjacent RuvB subunits; this complex drives branch migration. In the full resolvosome a probable DNA-RuvA(4)-RuvB(12)-RuvC(2) complex forms which resolves the HJ.

The protein localises to the cytoplasm. The catalysed reaction is ATP + H2O = ADP + phosphate + H(+). In terms of biological role, the RuvA-RuvB-RuvC complex processes Holliday junction (HJ) DNA during genetic recombination and DNA repair, while the RuvA-RuvB complex plays an important role in the rescue of blocked DNA replication forks via replication fork reversal (RFR). RuvA specifically binds to HJ cruciform DNA, conferring on it an open structure. The RuvB hexamer acts as an ATP-dependent pump, pulling dsDNA into and through the RuvAB complex. RuvB forms 2 homohexamers on either side of HJ DNA bound by 1 or 2 RuvA tetramers; 4 subunits per hexamer contact DNA at a time. Coordinated motions by a converter formed by DNA-disengaged RuvB subunits stimulates ATP hydrolysis and nucleotide exchange. Immobilization of the converter enables RuvB to convert the ATP-contained energy into a lever motion, pulling 2 nucleotides of DNA out of the RuvA tetramer per ATP hydrolyzed, thus driving DNA branch migration. The RuvB motors rotate together with the DNA substrate, which together with the progressing nucleotide cycle form the mechanistic basis for DNA recombination by continuous HJ branch migration. Branch migration allows RuvC to scan DNA until it finds its consensus sequence, where it cleaves and resolves cruciform DNA. The polypeptide is Holliday junction branch migration complex subunit RuvB (Clostridium kluyveri (strain NBRC 12016)).